The sequence spans 252 residues: 2-succinyl-6-hydroxy-2,4-cyclohexadiene-1-carboxylate synthase (252 aa).

Belongs to the AB hydrolase superfamily. MenH family. In terms of assembly, monomer.

It catalyses the reaction 5-enolpyruvoyl-6-hydroxy-2-succinyl-cyclohex-3-ene-1-carboxylate = (1R,6R)-6-hydroxy-2-succinyl-cyclohexa-2,4-diene-1-carboxylate + pyruvate. It functions in the pathway quinol/quinone metabolism; 1,4-dihydroxy-2-naphthoate biosynthesis; 1,4-dihydroxy-2-naphthoate from chorismate: step 3/7. It participates in quinol/quinone metabolism; menaquinone biosynthesis. Catalyzes a proton abstraction reaction that results in 2,5-elimination of pyruvate from 2-succinyl-5-enolpyruvyl-6-hydroxy-3-cyclohexene-1-carboxylate (SEPHCHC) and the formation of 2-succinyl-6-hydroxy-2,4-cyclohexadiene-1-carboxylate (SHCHC). The protein is 2-succinyl-6-hydroxy-2,4-cyclohexadiene-1-carboxylate synthase of Salmonella newport (strain SL254).